We begin with the raw amino-acid sequence, 527 residues long: Peptide chain release factor 3 (527 aa).

One can recognise a tr-type G domain in the interval 9–277; sequence AKRRTFAIIS…AVVNWAPMPL (269 aa). Residues 18 to 25, 86 to 90, and 140 to 143 each bind GTP; these read SHPDAGKT, DTPGH, and NKLD.

It belongs to the TRAFAC class translation factor GTPase superfamily. Classic translation factor GTPase family. PrfC subfamily.

Its subcellular location is the cytoplasm. Its function is as follows. Increases the formation of ribosomal termination complexes and stimulates activities of RF-1 and RF-2. It binds guanine nucleotides and has strong preference for UGA stop codons. It may interact directly with the ribosome. The stimulation of RF-1 and RF-2 is significantly reduced by GTP and GDP, but not by GMP. The protein is Peptide chain release factor 3 of Pseudomonas syringae pv. tomato (strain ATCC BAA-871 / DC3000).